Here is a 750-residue protein sequence, read N- to C-terminus: MIIRSPEPEVKIVVDRDPVKTSFEEWARPGHFSRTLAKGPDTTTWIWNLHADAHDFDSHTGDLEEISRKVFSAHFGQLSIIFLWLSGMYFHGARFSNYEAWLSDPTHIGPSAQVVWPIVGQEILNGDVGGGFRGIQITSGFFQLWRASGITSELQLYCTAIGALIFAALMLFAGWFHYHKAAPKLAWFQDVESMLNHHLAGLLGLGSLSWAGHQIHVSLPINQFLDAGVDPKEIPLPHEFILNRDLLAQLYPSFAEGATPFFTLNWSKYAEFLTFRGGLDPVTGGLWLTDIAHHHLAIAILFLIAGHMYRTNWGIGHGLKDILEAHKGPFTGQGHKGLYEILTTSWHAQLSLNLAMLGSTTIVVAHHMYAMPPYPYLATDYGTQLSLFTHHMWIGGFLIVGAAAHAAIFMVRDYDPTTRYNDLLDRVLRHRDAIISHLNWVCIFLGFHSFGLYIHNDTMSALGRPQDMFSDTAIQLQPIFAQWVQNIHATAPGVTAPGATTSTSLTWGGGELVAVGGKVALLPIPLGTADFLVHHIHAFTIHVTVLILLKGVLFARSSRLIPDKANLGFRFPCDGPGRGGTCQVSAWDHVFLGLFWMYNAISVVIFHFSWKMQSDVWGTISDQGVVTHITGGNFAQSSITINGWLRDFLWAQASQVIQSYGSSLSAYGLFFLGAHFVWAFSLMFLFSGRGYWQELIESIVWAHNKLKVAPATQPRALSIIQGRAVGVTHYLLGGIATTWAFFLARIIAVG.

Helical transmembrane passes span 70–93, 156–179, 195–219, 291–309, 346–369, 385–411, 433–455, and 531–549; these read VFSA…FHGA, LYCT…FHYH, LNHH…HVSL, IAHH…GHMY, WHAQ…HHMY, LSLF…IFMV, AIIS…LYIH, and FLVH…LILL. Residues Cys573 and Cys582 each coordinate [4Fe-4S] cluster. A run of 2 helical transmembrane segments spans residues 589-610 and 664-686; these read HVFL…HFSW and LSAY…MFLF. His675 lines the chlorophyll a' pocket. Chlorophyll a is bound by residues Met683 and Tyr691. Residue Trp692 coordinates phylloquinone. A helical transmembrane segment spans residues 724 to 744; that stretch reads AVGVTHYLLGGIATTWAFFLA.

The protein belongs to the PsaA/PsaB family. The PsaA/B heterodimer binds the P700 chlorophyll special pair and subsequent electron acceptors. PSI consists of a core antenna complex that captures photons, and an electron transfer chain that converts photonic excitation into a charge separation. The eukaryotic PSI reaction center is composed of at least 11 subunits. The cofactor is P700 is a chlorophyll a/chlorophyll a' dimer, A0 is one or more chlorophyll a, A1 is one or both phylloquinones and FX is a shared 4Fe-4S iron-sulfur center..

The protein resides in the plastid. It is found in the chloroplast thylakoid membrane. It catalyses the reaction reduced [plastocyanin] + hnu + oxidized [2Fe-2S]-[ferredoxin] = oxidized [plastocyanin] + reduced [2Fe-2S]-[ferredoxin]. In terms of biological role, psaA and PsaB bind P700, the primary electron donor of photosystem I (PSI), as well as the electron acceptors A0, A1 and FX. PSI is a plastocyanin-ferredoxin oxidoreductase, converting photonic excitation into a charge separation, which transfers an electron from the donor P700 chlorophyll pair to the spectroscopically characterized acceptors A0, A1, FX, FA and FB in turn. Oxidized P700 is reduced on the lumenal side of the thylakoid membrane by plastocyanin. The polypeptide is Photosystem I P700 chlorophyll a apoprotein A1 (Agrostis stolonifera (Creeping bentgrass)).